Consider the following 158-residue polypeptide: Non-specific lipid transfer protein GPI-anchored 29 (158 aa).

An N-terminal signal peptide occupies residues 1–24 (MAYFSTATSLLLLVLSVSSPYVHG). Cystine bridges form between cysteine 28–cysteine 71, cysteine 38–cysteine 55, cysteine 56–cysteine 95, and cysteine 69–cysteine 105. Asparagine 84 carries N-linked (GlcNAc...) asparagine glycosylation. A lipid anchor (GPI-anchor amidated serine) is attached at serine 134. Positions 135 to 158 (KGNSLIPISGFSFVIVTALAMFRI) are cleaved as a propeptide — removed in mature form.

The protein belongs to the plant LTP family. As to expression, confined to the ovaries of the inflorescence.

It is found in the secreted. The protein resides in the cell membrane. Functionally, probable lipid transfer protein. The sequence is that of Non-specific lipid transfer protein GPI-anchored 29 from Arabidopsis thaliana (Mouse-ear cress).